Consider the following 106-residue polypeptide: Putative defensin-like protein 224 (106 aa).

The N-terminal stretch at 1–23 is a signal peptide; that stretch reads MKTLSLFFTLVILISSCVSNLMA. 3 disulfides stabilise this stretch: Cys-60–Cys-78, Cys-64–Cys-84, and Cys-68–Cys-86.

This sequence belongs to the DEFL family.

Its subcellular location is the secreted. This chain is Putative defensin-like protein 224, found in Arabidopsis thaliana (Mouse-ear cress).